Here is a 429-residue protein sequence, read N- to C-terminus: Glutamate-1-semialdehyde 2,1-aminomutase (429 aa).

The residue at position 267 (Lys267) is an N6-(pyridoxal phosphate)lysine.

It belongs to the class-III pyridoxal-phosphate-dependent aminotransferase family. HemL subfamily. In terms of assembly, homodimer. Pyridoxal 5'-phosphate is required as a cofactor.

It localises to the cytoplasm. The catalysed reaction is (S)-4-amino-5-oxopentanoate = 5-aminolevulinate. The protein operates within porphyrin-containing compound metabolism; protoporphyrin-IX biosynthesis; 5-aminolevulinate from L-glutamyl-tRNA(Glu): step 2/2. This chain is Glutamate-1-semialdehyde 2,1-aminomutase, found in Anaeromyxobacter sp. (strain Fw109-5).